Here is a 62-residue protein sequence, read N- to C-terminus: UPF0434 protein Avi_4243 (62 aa).

Belongs to the UPF0434 family.

This Allorhizobium ampelinum (strain ATCC BAA-846 / DSM 112012 / S4) (Agrobacterium vitis (strain S4)) protein is UPF0434 protein Avi_4243.